A 623-amino-acid chain; its full sequence is Transketolase (623 aa).

Met-1 carries the post-translational modification N-acetylmethionine. Lys-6 and Lys-11 each carry N6-acetyllysine. A substrate-binding site is contributed by His-37. 2 residues coordinate thiamine diphosphate: Ser-40 and His-77. Position 104 is a phosphoserine (Ser-104). Thiamine diphosphate is bound at residue 123-125 (GSL). Lys-144 is modified (N6-acetyllysine). Mg(2+) is bound at residue Asp-155. Residues Gly-156 and Asn-185 each coordinate thiamine diphosphate. Residues Asn-185 and Leu-187 each contribute to the Mg(2+) site. N6-acetyllysine is present on residues Lys-204, Lys-232, and Lys-241. Lys-244 and His-258 together coordinate thiamine diphosphate. Residue His-258 coordinates substrate. An N6-acetyllysine modification is found at Lys-260. Phosphotyrosine is present on Tyr-275. A Phosphothreonine modification is found at Thr-287. Ser-295 is modified (phosphoserine). Arg-318 provides a ligand contact to substrate. Lys-352 is covalently cross-linked (Glycyl lysine isopeptide (Lys-Gly) (interchain with G-Cter in SUMO2)). Glu-366 acts as the Proton donor in catalysis. Phe-392 is a thiamine diphosphate binding site. Substrate is bound by residues His-416 and Asp-424. Residue Gln-428 participates in thiamine diphosphate binding. Arg-474 is a binding site for substrate. N6-acetyllysine occurs at positions 538 and 603.

The protein belongs to the transketolase family. Homodimer. It depends on Mg(2+) as a cofactor. Ca(2+) is required as a cofactor. The cofactor is Mn(2+). Requires Co(2+) as cofactor. Thiamine diphosphate serves as cofactor.

It carries out the reaction D-sedoheptulose 7-phosphate + D-glyceraldehyde 3-phosphate = aldehydo-D-ribose 5-phosphate + D-xylulose 5-phosphate. In terms of biological role, catalyzes the transfer of a two-carbon ketol group from a ketose donor to an aldose acceptor, via a covalent intermediate with the cofactor thiamine pyrophosphate. The polypeptide is Transketolase (TKT) (Pongo abelii (Sumatran orangutan)).